We begin with the raw amino-acid sequence, 1146 residues long: Ankyrin repeat domain-containing protein 24 (1146 aa).

5 ANK repeats span residues 81–110, 114–143, 147–176, 180–209, and 213–242; these read EGKSAFHLAAMRGAASCLEVMIAHGSNVMS, AGYNALHLAAKYGHPQCLKQLLQASCVVDV, SGWTALHHAAAGGCLSCSEVLCSFKAHLNP, SGATPLIIAAQMCHTDLCRLLLQQGAAAND, and QGRTALMLACEGASPETVEVLLQGGAQPGI. 3 disordered regions span residues 272 to 320, 607 to 627, and 766 to 785; these read RPSP…PDDR, REMETTEEEANMETKPTGAQA, and ERVREAEGSGASGGGGGDTT. Over residues 286-297 the composition is skewed to polar residues; sequence EASSQNSMSSHG. Residues 320-517 adopt a coiled-coil conformation; the sequence is RDAYEEIVRL…QALRQQETRE (198 aa). Positions 714-1110 form a coiled coil; the sequence is AAEASEKLQV…AARDHSSVVA (397 aa).

Homodimer. Interacts (via C-terminal domain) with TRIOBP (via C-terminal domain) isoform 4; recruits TRIOBP isoform 4 to stereocilia rootlets.

The protein resides in the cell membrane. The protein localises to the cell projection. Its subcellular location is the stereocilium. Its function is as follows. Component of the stereocilia rootlet in hair cells of inner ear. Bridges the apical plasma membrane with the lower rootlet and maintains normal distribution of TRIOBP, thereby reinforcing stereocilia insertion points and organizing rootlets for hearing with long-term resilience. The chain is Ankyrin repeat domain-containing protein 24 from Homo sapiens (Human).